The sequence spans 404 residues: Probable glucan endo-1,6-beta-glucosidase B (404 aa).

Residues 1 to 20 form the signal peptide; the sequence is MTTYQTLFLIPLAISTLVTA. 2 N-linked (GlcNAc...) asparagine glycosylation sites follow: Asn33 and Asn130. Glu222 functions as the Proton donor in the catalytic mechanism. N-linked (GlcNAc...) asparagine glycosylation is found at Asn253 and Asn299. Glu324 (nucleophile) is an active-site residue.

This sequence belongs to the glycosyl hydrolase 5 (cellulase A) family.

The protein localises to the secreted. It catalyses the reaction Random hydrolysis of (1-&gt;6)-linkages in (1-&gt;6)-beta-D-glucans.. Beta-glucanases participate in the metabolism of beta-glucan, the main structural component of the cell wall. Acts on lutean, pustulan and 1,6-oligo-beta-D-glucosides. This chain is Probable glucan endo-1,6-beta-glucosidase B (exgB), found in Aspergillus terreus (strain NIH 2624 / FGSC A1156).